Here is a 145-residue protein sequence, read N- to C-terminus: D-aminoacyl-tRNA deacylase (145 aa).

The Gly-cisPro motif, important for rejection of L-amino acids signature appears at 137–138 (GP).

The protein belongs to the DTD family. Homodimer.

It localises to the cytoplasm. It carries out the reaction glycyl-tRNA(Ala) + H2O = tRNA(Ala) + glycine + H(+). The catalysed reaction is a D-aminoacyl-tRNA + H2O = a tRNA + a D-alpha-amino acid + H(+). An aminoacyl-tRNA editing enzyme that deacylates mischarged D-aminoacyl-tRNAs. Also deacylates mischarged glycyl-tRNA(Ala), protecting cells against glycine mischarging by AlaRS. Acts via tRNA-based rather than protein-based catalysis; rejects L-amino acids rather than detecting D-amino acids in the active site. By recycling D-aminoacyl-tRNA to D-amino acids and free tRNA molecules, this enzyme counteracts the toxicity associated with the formation of D-aminoacyl-tRNA entities in vivo and helps enforce protein L-homochirality. In Pseudomonas fluorescens (strain Pf0-1), this protein is D-aminoacyl-tRNA deacylase.